A 382-amino-acid polypeptide reads, in one-letter code: Ribosomal RNA large subunit methyltransferase G (382 aa).

This sequence belongs to the methyltransferase superfamily. RlmG family.

The protein resides in the cytoplasm. The catalysed reaction is guanosine(1835) in 23S rRNA + S-adenosyl-L-methionine = N(2)-methylguanosine(1835) in 23S rRNA + S-adenosyl-L-homocysteine + H(+). Its function is as follows. Specifically methylates the guanine in position 1835 (m2G1835) of 23S rRNA. This chain is Ribosomal RNA large subunit methyltransferase G, found in Psychromonas ingrahamii (strain DSM 17664 / CCUG 51855 / 37).